A 557-amino-acid polypeptide reads, in one-letter code: Aspartate--tRNA ligase, cytoplasmic (557 aa).

Over residues 1–12 (MSQDENIVKAVE) the composition is skewed to basic and acidic residues. The segment at 1–74 (MSQDENIVKA…AAAEDTAKDN (74 aa)) is disordered. An N-acetylserine modification is found at Ser2. Ser14 is modified (phosphoserine). The span at 37 to 74 (LQKEQEKQRKKEERALQLEAEREAREKKAAAEDTAKDN) shows a compositional bias: basic and acidic residues. An L-aspartate-binding site is contributed by Glu281. A Phosphoserine modification is found at Ser301. An aspartate region spans residues 303–306 (QFNK). Residue Arg325 coordinates L-aspartate. ATP is bound by residues 325-327 (RAE), 333-335 (RHM), and Glu478. Residues Ser481 and Arg485 each contribute to the L-aspartate site. Ser502 is subject to Phosphoserine. Residue 528 to 531 (GLER) coordinates ATP. Ser546 is modified (phosphoserine).

The protein belongs to the class-II aminoacyl-tRNA synthetase family. Type 2 subfamily. In terms of assembly, homodimer.

It localises to the cytoplasm. It carries out the reaction tRNA(Asp) + L-aspartate + ATP = L-aspartyl-tRNA(Asp) + AMP + diphosphate. The protein is Aspartate--tRNA ligase, cytoplasmic (DPS1) of Saccharomyces cerevisiae (strain ATCC 204508 / S288c) (Baker's yeast).